The sequence spans 215 residues: Cytochrome b6 (215 aa).

A helical transmembrane segment spans residues 32–52 (IFYCLGGITLTCFIVQVATGF). Cys35 lines the heme c pocket. Positions 86 and 100 each coordinate heme b. A run of 3 helical transmembrane segments spans residues 90 to 110 (ASMM…TGGF), 116 to 136 (LTWV…VTGY), and 186 to 206 (AHTF…FVMI). Heme b-binding residues include His187 and His202.

Belongs to the cytochrome b family. PetB subfamily. The 4 large subunits of the cytochrome b6-f complex are cytochrome b6, subunit IV (17 kDa polypeptide, PetD), cytochrome f and the Rieske protein, while the 4 small subunits are PetG, PetL, PetM and PetN. The complex functions as a dimer. The cofactor is heme b. Heme c serves as cofactor.

It is found in the plastid. The protein resides in the chloroplast thylakoid membrane. In terms of biological role, component of the cytochrome b6-f complex, which mediates electron transfer between photosystem II (PSII) and photosystem I (PSI), cyclic electron flow around PSI, and state transitions. The chain is Cytochrome b6 from Emiliania huxleyi (Coccolithophore).